The chain runs to 308 residues: tRNA dimethylallyltransferase (308 aa).

Position 14-21 (14-21) interacts with ATP; sequence GPTASGKT. A substrate-binding site is contributed by 16-21; that stretch reads TASGKT. Interaction with substrate tRNA stretches follow at residues 39-42, 163-167, and 244-249; these read DSAL, QRLSR, and RCVGYR.

Belongs to the IPP transferase family. In terms of assembly, monomer. It depends on Mg(2+) as a cofactor.

It catalyses the reaction adenosine(37) in tRNA + dimethylallyl diphosphate = N(6)-dimethylallyladenosine(37) in tRNA + diphosphate. Catalyzes the transfer of a dimethylallyl group onto the adenine at position 37 in tRNAs that read codons beginning with uridine, leading to the formation of N6-(dimethylallyl)adenosine (i(6)A). This Shewanella baltica (strain OS223) protein is tRNA dimethylallyltransferase.